A 510-amino-acid polypeptide reads, in one-letter code: MIKSTTNPQEQRLPRPEDQSPAPPPPPPSSATTSTAAPATPTHQVATVIANMDTLKTAFLPNLSMDPNVHVSPHYCPMCHQQFERPQHVADHMQLCHGITLNAQGAIATLDGGHPQAQQHPKLSHPCFNCDEKFGNAVDLDEHHRLAHQTPAFLSRCLMCSIYGIHSATQQPNEYKCTQCGSICTTAMLAAGQQGFMEQQEAAVTPDDQLPAMAPRDMRLTPEEQHHQQQLQAEHHHQQQHQQQQQQQQQQQELLEQQQREMQEQAQQQQVHHHQQDQDLAGDQVALKVPPLTVKLNKNANGGAIVSHPQVIIKEEPLSLSDSGDVVNSVPVYAIQANPGVPAPASSGVLVGTQTVPADLAHKIRHKCPDCPKTFKTPGTLAMHRKIHTGEADATPKERPYTCSYCGKSFTQSNTLKQHTRIHTGEKPFRCGYCGRAFTVKDYLNKHLTTHTGEKPFHCGYCEKSFSVKDYLTKHIRTHTGEKPYTCPYCDKRFTQRSALTVHTTKLHPL.

Polar residues predominate over residues 1-10 (MIKSTTNPQE). Residues 1–40 (MIKSTTNPQEQRLPRPEDQSPAPPPPPPSSATTSTAAPAT) are disordered. A compositionally biased stretch (low complexity) spans 30 to 40 (SATTSTAAPAT). C2H2-type zinc fingers lie at residues 74–97 (HYCP…QLCH) and 125–148 (HPCF…RLAH). Residues 222-237 (PEEQHHQQQLQAEHHH) are compositionally biased toward basic and acidic residues. A disordered region spans residues 222–279 (PEEQHHQQQLQAEHHHQQQHQQQQQQQQQQQELLEQQQREMQEQAQQQQVHHHQQDQD). The span at 240 to 257 (QHQQQQQQQQQQQELLEQ) shows a compositional bias: low complexity. C2H2-type zinc fingers lie at residues 366 to 388 (HKCP…RKIH), 401 to 423 (YTCS…TRIH), 429 to 451 (FRCG…LTTH), 457 to 479 (FHCG…IRTH), and 485 to 508 (YTCP…TKLH).

Isoform I is found in embryos, pupae and adult somatic tissue; isoform II occurs in embryos, pupae, ovaries, testis and to a lesser extent in adult somatic tissue.

The protein localises to the nucleus. In terms of biological role, transcriptional regulator; binds to the promoter region of Cp15. Also binds to its own promoter, thus having a probable autoregulatory role. The chain is Chorion transcription factor Cf2 (Cf2) from Drosophila melanogaster (Fruit fly).